Reading from the N-terminus, the 601-residue chain is Potassium-transporting ATPase potassium-binding subunit (601 aa).

Helical transmembrane passes span 6-26 (IMLL…LGLF), 65-85 (SYAI…YAVQ), 136-156 (ALTG…FALI), 179-199 (LYIL…QGVI), 283-303 (FSNF…CFTF), 313-333 (GWAV…IVMT), 367-387 (FGIS…CGAV), 397-417 (MGGF…GGVG), 419-439 (GLYG…LMIG), 458-478 (SIAI…AVLV), 524-544 (MLAI…LAIA), and 566-586 (LFVA…YVPA).

It belongs to the KdpA family. The system is composed of three essential subunits: KdpA, KdpB and KdpC.

Its subcellular location is the cell inner membrane. Functionally, part of the high-affinity ATP-driven potassium transport (or Kdp) system, which catalyzes the hydrolysis of ATP coupled with the electrogenic transport of potassium into the cytoplasm. This subunit binds the periplasmic potassium ions and delivers the ions to the membrane domain of KdpB through an intramembrane tunnel. The protein is Potassium-transporting ATPase potassium-binding subunit of Herminiimonas arsenicoxydans.